A 442-amino-acid chain; its full sequence is tRNA-2-methylthio-N(6)-dimethylallyladenosine synthase (442 aa).

One can recognise an MTTase N-terminal domain in the interval 3–120 (KKLYIETHGC…LPEMIDAARV (118 aa)). Residues cysteine 12, cysteine 49, cysteine 83, cysteine 157, cysteine 161, and cysteine 164 each coordinate [4Fe-4S] cluster. A Radical SAM core domain is found at 143–375 (RVDGPSAYVS…QHRLNQQGFE (233 aa)). Residues 378-442 (RQMVGSIQRI…PHSLRGSLLQ (65 aa)) enclose the TRAM domain.

The protein belongs to the methylthiotransferase family. MiaB subfamily. Monomer. The cofactor is [4Fe-4S] cluster.

The protein localises to the cytoplasm. It carries out the reaction N(6)-dimethylallyladenosine(37) in tRNA + (sulfur carrier)-SH + AH2 + 2 S-adenosyl-L-methionine = 2-methylsulfanyl-N(6)-dimethylallyladenosine(37) in tRNA + (sulfur carrier)-H + 5'-deoxyadenosine + L-methionine + A + S-adenosyl-L-homocysteine + 2 H(+). In terms of biological role, catalyzes the methylthiolation of N6-(dimethylallyl)adenosine (i(6)A), leading to the formation of 2-methylthio-N6-(dimethylallyl)adenosine (ms(2)i(6)A) at position 37 in tRNAs that read codons beginning with uridine. In Pseudomonas syringae pv. syringae (strain B728a), this protein is tRNA-2-methylthio-N(6)-dimethylallyladenosine synthase.